Here is a 248-residue protein sequence, read N- to C-terminus: Trypsin I-P1 (248 aa).

The N-terminal stretch at 1 to 15 (MKFLVLVAFVGVTVA) is a signal peptide. Residues 16-25 (FPISDEDDDK) constitute a propeptide, activation peptide. In terms of domain architecture, Peptidase S1 spans 26–246 (IVGGYSCARS…YVSWIKTTMS (221 aa)). Disulfide bonds link cysteine 32/cysteine 162, cysteine 50/cysteine 66, cysteine 134/cysteine 235, cysteine 141/cysteine 208, cysteine 173/cysteine 187, and cysteine 198/cysteine 222. Residue histidine 65 is the Charge relay system of the active site. Positions 77, 79, and 87 each coordinate Ca(2+). Aspartate 109 (charge relay system) is an active-site residue. The Charge relay system role is filled by serine 202.

Belongs to the peptidase S1 family. Ca(2+) serves as cofactor. As to expression, high levels are seen in the pancreas while lower levels are found in the liver, spleen and thymus.

Its subcellular location is the secreted. It localises to the extracellular space. It catalyses the reaction Preferential cleavage: Arg-|-Xaa, Lys-|-Xaa.. This is Trypsin I-P1 from Gallus gallus (Chicken).